A 185-amino-acid chain; its full sequence is uncharacterized protein (185 aa).

To M.thermoautotrophicum MTH236.

This is an uncharacterized protein from Methanocaldococcus jannaschii (strain ATCC 43067 / DSM 2661 / JAL-1 / JCM 10045 / NBRC 100440) (Methanococcus jannaschii).